Here is a 147-residue protein sequence, read N- to C-terminus: Hemoglobin subunit beta-H0 (147 aa).

The Globin domain maps to 3 to 147 (HFTAEEKAAI…VATALSHKYH (145 aa)). Residues histidine 64 and histidine 93 each coordinate heme b.

This sequence belongs to the globin family. As to quaternary structure, heterotetramer of two alpha chains and two beta chains. Red blood cells.

This is a minor early embryonic beta chain. The sequence is that of Hemoglobin subunit beta-H0 (Hbb-bh0) from Mus musculus (Mouse).